Consider the following 84-residue polypeptide: Putative protein BCE-1 (84 aa).

This Homo sapiens (Human) protein is Putative protein BCE-1 (BCE1).